The following is a 95-amino-acid chain: Large ribosomal subunit protein uL24c (95 aa).

Belongs to the universal ribosomal protein uL24 family. Part of the 50S ribosomal subunit.

The protein resides in the plastid. The protein localises to the chloroplast. Functionally, one of two assembly initiator proteins, it binds directly to the 5'-end of the 23S rRNA, where it nucleates assembly of the 50S subunit. The sequence is that of Large ribosomal subunit protein uL24c (rpl24) from Porphyra purpurea (Red seaweed).